Reading from the N-terminus, the 89-residue chain is MTKGTTSFGKRHNKTHTICRRCGNSSYHLQKSKCSQCGYPAAKTRSFNWSRKAKGRKAQGTGRMRYLKNLRRRFRNGLREGGAAKKKTN.

Zn(2+)-binding residues include cysteine 19, cysteine 22, cysteine 34, and cysteine 37. The segment at 19–37 (CRRCGNSSYHLQKSKCSQC) adopts a C4-type zinc-finger fold.

Belongs to the eukaryotic ribosomal protein eL37 family. The cofactor is Zn(2+).

Its function is as follows. Binds to the 23S rRNA. The polypeptide is Large ribosomal subunit protein L37-2 (Drosophila melanogaster (Fruit fly)).